Consider the following 245-residue polypeptide: 1-(5-phosphoribosyl)-5-[(5-phosphoribosylamino)methylideneamino] imidazole-4-carboxamide isomerase (245 aa).

Asp7 functions as the Proton acceptor in the catalytic mechanism. Asp129 (proton donor) is an active-site residue.

The protein belongs to the HisA/HisF family.

The protein localises to the cytoplasm. It catalyses the reaction 1-(5-phospho-beta-D-ribosyl)-5-[(5-phospho-beta-D-ribosylamino)methylideneamino]imidazole-4-carboxamide = 5-[(5-phospho-1-deoxy-D-ribulos-1-ylimino)methylamino]-1-(5-phospho-beta-D-ribosyl)imidazole-4-carboxamide. The protein operates within amino-acid biosynthesis; L-histidine biosynthesis; L-histidine from 5-phospho-alpha-D-ribose 1-diphosphate: step 4/9. This chain is 1-(5-phosphoribosyl)-5-[(5-phosphoribosylamino)methylideneamino] imidazole-4-carboxamide isomerase, found in Escherichia coli O81 (strain ED1a).